The primary structure comprises 93 residues: Large ribosomal subunit protein uL23cz/uL23cy (93 aa).

Belongs to the universal ribosomal protein uL23 family. Part of the 50S ribosomal subunit.

It is found in the plastid. Its subcellular location is the chloroplast. In terms of biological role, binds to 23S rRNA. The protein is Large ribosomal subunit protein uL23cz/uL23cy (rpl23-A) of Lotus japonicus (Lotus corniculatus var. japonicus).